Consider the following 372-residue polypeptide: MTRYCAATRCKNRGGQAAVIQRKVSFYPFPLHDRGRLQEWLRNMKQYKLYPTKHQVLCSDHFTADSFNIRWGIQYLKPNAIPTLFSFTEKIQDIAELELTIKEGTQDGVKVDTDTVPSQDFCPNVTNNLSHGFDTDEYVDPDDKQVYLKNTIDGITVSQNKTKDLYVPNSEYEIQPHLITPSKFRQTSVENMIVSSVADLNSQSNQVYFELQTDQNYVAENVDTFQVDHFSDVQKETFPLSLVKQTKQMDAEKDSVITIIVPGGQDGSAISDNLQFTSSEKLGFENDANSTNEILESEHSYCRQITDRHYLRQKIAKLQSKIAVLEAQENATLSRLRLLESVIAKLKQENLLSDEKLKILENCGSSVDIVIV.

A THAP-type zinc finger spans residues 1 to 85; it reads MTRYCAATRC…LKPNAIPTLF (85 aa). A coiled-coil region spans residues 306–362; it reads TDRHYLRQKIAKLQSKIAVLEAQENATLSRLRLLESVIAKLKQENLLSDEKLKILEN.

The protein resides in the nucleus. This is THAP domain-containing protein 5 (thap5) from Xenopus laevis (African clawed frog).